A 233-amino-acid polypeptide reads, in one-letter code: ATP synthase subunit a (233 aa).

Transmembrane regions (helical) follow at residues 29–49 (FKHV…SFIV), 60–80 (LQNI…SITG), 89–109 (VLIV…VPGF), 115–135 (NINT…YIGI), 143–163 (IKHF…LELI), 185–205 (FVLI…IYFL), and 206–226 (FTLA…IYLK).

Belongs to the ATPase A chain family. In terms of assembly, F-type ATPases have 2 components, CF(1) - the catalytic core - and CF(0) - the membrane proton channel. CF(1) has five subunits: alpha(3), beta(3), gamma(1), delta(1), epsilon(1). CF(0) has three main subunits: a(1), b(2) and c(9-12). The alpha and beta chains form an alternating ring which encloses part of the gamma chain. CF(1) is attached to CF(0) by a central stalk formed by the gamma and epsilon chains, while a peripheral stalk is formed by the delta and b chains.

The protein localises to the cell inner membrane. Functionally, key component of the proton channel; it plays a direct role in the translocation of protons across the membrane. The sequence is that of ATP synthase subunit a from Oleidesulfovibrio alaskensis (strain ATCC BAA-1058 / DSM 17464 / G20) (Desulfovibrio alaskensis).